A 649-amino-acid chain; its full sequence is UvrABC system protein B (649 aa).

Positions 25-178 (EHYKDGIKEQ…EDILKELVKM (154 aa)) constitute a Helicase ATP-binding domain. 38–45 (GVTGSGKT) lines the ATP pocket. Residues 91–114 (YYDYYQPEAYVAQTDTFIDKESAI) carry the Beta-hairpin motif. A Helicase C-terminal domain is found at 428 to 594 (QVDDLLGEIR…SVVRKLKDKK (167 aa)). The UVR domain maps to 614 to 649 (DEIIKELEKEMKQAAKDLNFEKAAKLRDRIMELKEE).

It belongs to the UvrB family. As to quaternary structure, forms a heterotetramer with UvrA during the search for lesions. Interacts with UvrC in an incision complex.

It is found in the cytoplasm. The UvrABC repair system catalyzes the recognition and processing of DNA lesions. A damage recognition complex composed of 2 UvrA and 2 UvrB subunits scans DNA for abnormalities. Upon binding of the UvrA(2)B(2) complex to a putative damaged site, the DNA wraps around one UvrB monomer. DNA wrap is dependent on ATP binding by UvrB and probably causes local melting of the DNA helix, facilitating insertion of UvrB beta-hairpin between the DNA strands. Then UvrB probes one DNA strand for the presence of a lesion. If a lesion is found the UvrA subunits dissociate and the UvrB-DNA preincision complex is formed. This complex is subsequently bound by UvrC and the second UvrB is released. If no lesion is found, the DNA wraps around the other UvrB subunit that will check the other stand for damage. This chain is UvrABC system protein B, found in Methanosphaera stadtmanae (strain ATCC 43021 / DSM 3091 / JCM 11832 / MCB-3).